A 130-amino-acid chain; its full sequence is MTLMDPLADAMATIKNNEMVGNKECVIEPASKLIGRVLKVMQEYGYIGSFEFIDDGRSGKFLVKLVGRINDCGVIKPRHPVKKDEWEYWEQRYLPARDFGLLIVTTPEGVMSHYEAKERGIGGRLLAYVY.

The protein belongs to the universal ribosomal protein uS8 family. Part of the 30S ribosomal subunit.

In terms of biological role, one of the primary rRNA binding proteins, it binds directly to 16S rRNA central domain where it helps coordinate assembly of the platform of the 30S subunit. The polypeptide is Small ribosomal subunit protein uS8 (Methanopyrus kandleri (strain AV19 / DSM 6324 / JCM 9639 / NBRC 100938)).